Reading from the N-terminus, the 445-residue chain is ATP synthase subunit b-delta (445 aa).

The tract at residues 1–168 (MSIFIGQLIG…PSSVVIDTAA (168 aa)) is ATP synthase subunit b. The chain crosses the membrane as a helical span at residues 3 to 23 (IFIGQLIGFAVIAFIIVKWVV). Residues 169 to 445 (TSRLRAASRQ…LAAAQTGLPD (277 aa)) form an ATP synthase subunit delta region.

This sequence in the N-terminal section; belongs to the ATPase B chain family. In the C-terminal section; belongs to the ATPase delta chain family. As to quaternary structure, F-type ATPases have 2 components, F(1) - the catalytic core - and F(0) - the membrane proton channel. F(1) has five subunits: alpha(3), beta(3), gamma(1), delta(1), epsilon(1). F(0) has three main subunits: a(1), b(2) and c(10-14). The alpha and beta chains form an alternating ring which encloses part of the gamma chain. F(1) is attached to F(0) by a central stalk formed by the gamma and epsilon chains, while a peripheral stalk is formed by the delta and b chains.

The protein resides in the cell membrane. In terms of biological role, f(1)F(0) ATP synthase produces ATP from ADP in the presence of a proton or sodium gradient. F-type ATPases consist of two structural domains, F(1) containing the extramembraneous catalytic core and F(0) containing the membrane proton channel, linked together by a central stalk and a peripheral stalk. During catalysis, ATP synthesis in the catalytic domain of F(1) is coupled via a rotary mechanism of the central stalk subunits to proton translocation. Functionally, this fusion protein includes a component of the F(0) channel (subunit b) and of the F(1) subunit (subunit delta). Two copies of subunit b and one of delta together form the peripheral 'stator' stalk which links F(1) to F(0). The polypeptide is ATP synthase subunit b-delta (atpFH) (Mycolicibacterium smegmatis (strain ATCC 700084 / mc(2)155) (Mycobacterium smegmatis)).